A 162-amino-acid chain; its full sequence is NADH-quinone oxidoreductase subunit I (162 aa).

4Fe-4S ferredoxin-type domains lie at 52-82 (LRRY…IEAG) and 93-122 (VRYD…EGPN). Residues Cys-62, Cys-65, Cys-68, Cys-72, Cys-102, Cys-105, Cys-108, and Cys-112 each contribute to the [4Fe-4S] cluster site.

This sequence belongs to the complex I 23 kDa subunit family. NDH-1 is composed of 14 different subunits. Subunits NuoA, H, J, K, L, M, N constitute the membrane sector of the complex. [4Fe-4S] cluster serves as cofactor.

It is found in the cell inner membrane. It carries out the reaction a quinone + NADH + 5 H(+)(in) = a quinol + NAD(+) + 4 H(+)(out). In terms of biological role, NDH-1 shuttles electrons from NADH, via FMN and iron-sulfur (Fe-S) centers, to quinones in the respiratory chain. The immediate electron acceptor for the enzyme in this species is believed to be ubiquinone. Couples the redox reaction to proton translocation (for every two electrons transferred, four hydrogen ions are translocated across the cytoplasmic membrane), and thus conserves the redox energy in a proton gradient. This chain is NADH-quinone oxidoreductase subunit I, found in Nitrobacter hamburgensis (strain DSM 10229 / NCIMB 13809 / X14).